The chain runs to 136 residues: ATP synthase F(0) complex subunit C1, mitochondrial (136 aa).

A mitochondrion-targeting transit peptide spans 1 to 61; sequence MQTTKALLIS…REFQTSVISR (61 aa). A helical membrane pass occupies residues 77-97; sequence VGVAGSGAGIGTVFGSLIIGY. Lysine 104 carries the N6,N6,N6-trimethyllysine modification. A helical membrane pass occupies residues 112–132; sequence ILGFALSEAMGLFCLMVAFLI.

It belongs to the ATPase C chain family. As to quaternary structure, homooctamer; the c-ring consists of eight c subunits forming a circle, and each subunit adopts a hairpin shape. Component of the ATP synthase complex composed at least of ATP5F1A/subunit alpha, ATP5F1B/subunit beta, ATP5MC1/subunit c (homooctomer), MT-ATP6/subunit a, MT-ATP8/subunit 8, ATP5ME/subunit e, ATP5MF/subunit f, ATP5MG/subunit g, ATP5MK/subunit k, ATP5MJ/subunit j, ATP5F1C/subunit gamma, ATP5F1D/subunit delta, ATP5F1E/subunit epsilon, ATP5PF/subunit F6, ATP5PB/subunit b, ATP5PD/subunit d, ATP5PO/subunit OSCP. ATP synthase complex consists of a soluble F(1) head domain (subunits alpha(3) and beta(3)) - the catalytic core - and a membrane F(0) domain - the membrane proton channel (subunits c, a, 8, e, f, g, k and j). These two domains are linked by a central stalk (subunits gamma, delta, and epsilon) rotating inside the F1 region and a stationary peripheral stalk (subunits F6, b, d, and OSCP). Interacts with TMEM70 (homooligomer form); this interaction facilitates the oligomer formation of subunit c/ATP5MC1 (c-ring) and the c-ring membrane insertion and also protects ATP5MC1 against intramitochondrial proteolysis. Post-translationally, trimethylated by ATPSCKMT at Lys-104. Methylation is required for proper incorporation of the C subunit into the ATP synthase complex and mitochondrial respiration.

It localises to the mitochondrion membrane. The enzyme catalyses H(+)(in) = H(+)(out). In terms of biological role, subunit c, of the mitochondrial membrane ATP synthase complex (F(1)F(0) ATP synthase or Complex V) that produces ATP from ADP in the presence of a proton gradient across the membrane which is generated by electron transport complexes of the respiratory chain. ATP synthase complex consist of a soluble F(1) head domain - the catalytic core - and a membrane F(1) domain - the membrane proton channel. These two domains are linked by a central stalk rotating inside the F(1) region and a stationary peripheral stalk. During catalysis, ATP synthesis in the catalytic domain of F(1) is coupled via a rotary mechanism of the central stalk subunits to proton translocation. With the subunit a (MT-ATP6), forms the proton-conducting channel in the F(0) domain, that contains two crucial half-channels (inlet and outlet) that facilitate proton movement from the mitochondrial intermembrane space (IMS) into the matrix. Protons are taken up via the inlet half-channel and released through the outlet half-channel, following a Grotthuss mechanism. The chain is ATP synthase F(0) complex subunit C1, mitochondrial from Rattus norvegicus (Rat).